The sequence spans 878 residues: Calcium-transporting ATPase 1 (878 aa).

4 consecutive transmembrane segments (helical) span residues 50–72, 76–95, 243–263, and 281–301; these read LFID…VQLF, FVES…VAVV, LGWV…LRLF, and FAVA…VTIV. Residues V287, A288, I290, and E292 each contribute to the Ca(2+) site. Residue D334 is the 4-aspartylphosphate intermediate of the active site. 6 consecutive transmembrane segments (helical) span residues 681–701, 704–724, 753–773, 779–799, 816–836, and 845–865; these read LFSG…VGWV, FTAL…AIAL, VILI…YVGQ, MGVA…TFAA, YVLM…LPFL, and AFGW…VICM. Residues N713 and D717 each contribute to the Ca(2+) site.

Belongs to the cation transport ATPase (P-type) (TC 3.A.3) family. Type IIA subfamily.

Its subcellular location is the cell membrane. The catalysed reaction is Ca(2+)(in) + ATP + H2O = Ca(2+)(out) + ADP + phosphate + H(+). Its activity is regulated as follows. Inhibited by very high concentrations of cyclopiazonic acid (CPA). Catalyzes the hydrolysis of ATP coupled with the transport of calcium. The sequence is that of Calcium-transporting ATPase 1 (yoaB) from Lactococcus lactis subsp. lactis (strain IL1403) (Streptococcus lactis).